The chain runs to 1128 residues: Nck-associated protein 1 (1128 aa).

An N-acetylserine modification is found at S2. The interval 640 to 665 (AVNKKSKKQTGKKGEPEREKPGVESM) is disordered. A compositionally biased stretch (basic and acidic residues) spans 651-665 (KKGEPEREKPGVESM). Residues 995–1015 (IACLLMVFVAVSLPTLASNVM) traverse the membrane as a helical segment.

It belongs to the HEM-1/HEM-2 family. Component of the WAVE1 complex composed of ABI2, CYFIP1 or CYFIP2, BRK1, NCKAP1 and WASF1/WAVE1. Within the complex, a heterodimer containing NCKAP1 and CYFIP1 interacts with a heterotrimer formed by WAVE1, ABI2 and BRK1. Component of the WAVE2 complex composed of ABI1, CYFIP1/SRA1, NCKAP1/NAP1 and WASF2/WAVE2. CYFIP2 binds to activated RAC1 which causes the complex to dissociate, releasing activated WASF1. The complex can also be activated by NCK1. Associates preferentially with the first SH3 domain of NCK. Interacts with NYAP1, NYAP2 and MYO16. Interacts with TMEM132D. In terms of tissue distribution, preferentially expressed in brain, heart, liver and testis.

It is found in the cell membrane. It localises to the cell projection. Its subcellular location is the lamellipodium membrane. Functionally, part of the WAVE complex that regulates lamellipodia formation. The WAVE complex regulates actin filament reorganization via its interaction with the Arp2/3 complex. Actin remodeling activity is regulated by RAC1. As component of the WAVE1 complex, required for BDNF-NTRK2 endocytic trafficking and signaling from early endosomes. This is Nck-associated protein 1 (Nckap1) from Rattus norvegicus (Rat).